The following is a 618-amino-acid chain: MRRDVRILLLGEAQVGKTSLILSLVGEEFPEEVPPRAEEITIPADVTPEKVPTHIVDYSEAEQTDEELREEIHKANVVCVVYDVSEEATIEKIRTKWIPLVNGGTTQGPRVPIILVGNKSDLRSGSSMEAVLPIMSQFPEIETCVECSAKNLRNISELFYYAQKAVLHPTAPLYDPEAKQLRPACAQALTRIFRLSDQDLDQALSDEELNAFQKSCFGHPLAPQALEDVKTVVCRNVAGGVREDRLTLDGFLFLNTLFIQRGRHETTWTILRRFGYSDALELTADYLSPLIHVPPGCSTELNHLGYQFVQRVFEKHDQDRDGALSPVELQSLFSVFPAAPWGPELPRTVRTEAGRLPLHGYLCQWTLVTYLDVRSCLGHLGYLGYPTLCEQDQAHAITVTREKRLDQEKGQTQRSVLLCKVVGARGVGKSAFLQAFLGRGLGHQDTREQPPGYAIDTVQVNGQEKYLILCEVGTDGLLATSLDATCDVACLMFDGSDPKSFAHCASVYKHHYMDGQTPCLFVSSKADLPEGVAVSGPSPAEFCRKHRLPAPVPFSCAGPAEPSTTIFTQLATMAAFPHLVHAELHPSSFWLRGLLGVVGAAVAAVLSFSLYRVLVKSQ.

Over 1-592 (MRRDVRILLL…ELHPSSFWLR (592 aa)) the chain is Cytoplasmic. One can recognise a Miro 1 domain in the interval 2–168 (RRDVRILLLG…FYYAQKAVLH (167 aa)). Residues G16, K17, T18, and S19 each contribute to the GTP site. A Mg(2+)-binding site is contributed by T18. Positions 35 and 57 each coordinate Mg(2+). S59 contributes to the GTP binding site. K96 participates in a covalent cross-link: Glycyl lysine isopeptide (Lys-Gly) (interchain with G-Cter in ubiquitin). 5 residues coordinate GTP: N118, K119, D121, A149, and K150. Residue K119 forms a Glycyl lysine isopeptide (Lys-Gly) (interchain with G-Cter in ubiquitin) linkage. Residue K164 forms a Glycyl lysine isopeptide (Lys-Gly) (interchain with G-Cter in ubiquitin) linkage. 2 consecutive EF-hand domains span residues 184–219 (ACAQ…CFGH) and 304–339 (LGYQ…FPAA). Residues D197, D199, D201, E208, D317, D319, D321, and E328 each coordinate Ca(2+). One can recognise a Miro 2 domain in the interval 414-576 (RSVLLCKVVG…FTQLATMAAF (163 aa)). Residues G426, G428, K429, S430, and A431 each contribute to the GTP site. GDP is bound by residues G426, G428, K429, S430, and A431. S430 is a Mg(2+) binding site. E471 contacts Mg(2+). GTP is bound by residues K525, D527, and C556. 3 residues coordinate GDP: K525, D527, and C556. Residues 593 to 615 (GLLGVVGAAVAAVLSFSLYRVLV) traverse the membrane as a helical; Anchor for type IV membrane protein segment. The Mitochondrial intermembrane segment spans residues 616-618 (KSQ).

The protein belongs to the mitochondrial Rho GTPase family. In terms of assembly, homodimer. Interacts with the kinesin-binding proteins TRAK1/OIP106 and TRAK2/GRIF1, forming a link between mitochondria and the trafficking apparatus of the microtubules. Interacts with ARMCX3. Found in a complex with KIF5B, OGT, RHOT1 and TRAK1. Post-translationally, ubiquitinated by PRKN in a PINK1-dependent manner, leading to its degradation. Ubiquitously expressed. Highly expressed in heart, liver, skeletal muscle, kidney and pancreas.

The protein localises to the mitochondrion outer membrane. The catalysed reaction is GTP + H2O = GDP + phosphate + H(+). It catalyses the reaction ATP + H2O = ADP + phosphate + H(+). The enzyme catalyses UTP + H2O = UDP + phosphate + H(+). Functionally, atypical mitochondrial nucleoside-triphosphatase (NTPase) involved in mitochondrial trafficking. Probably involved in control of anterograde transport of mitochondria and their subcellular distribution. Can hydrolyze GTP. Can hydrolyze ATP and UTP. The chain is Mitochondrial Rho GTPase 2 (RHOT2) from Homo sapiens (Human).